We begin with the raw amino-acid sequence, 167 residues long: S-ribosylhomocysteine lyase (167 aa).

The Fe cation site is built by H54, H58, and C128.

This sequence belongs to the LuxS family. In terms of assembly, homodimer. Requires Fe cation as cofactor.

The enzyme catalyses S-(5-deoxy-D-ribos-5-yl)-L-homocysteine = (S)-4,5-dihydroxypentane-2,3-dione + L-homocysteine. Involved in the synthesis of autoinducer 2 (AI-2) which is secreted by bacteria and is used to communicate both the cell density and the metabolic potential of the environment. The regulation of gene expression in response to changes in cell density is called quorum sensing. Catalyzes the transformation of S-ribosylhomocysteine (RHC) to homocysteine (HC) and 4,5-dihydroxy-2,3-pentadione (DPD). This chain is S-ribosylhomocysteine lyase, found in Haemophilus influenzae (strain PittGG).